We begin with the raw amino-acid sequence, 159 residues long: Protein Smg homolog (159 aa).

It belongs to the Smg family.

The chain is Protein Smg homolog from Vibrio parahaemolyticus serotype O3:K6 (strain RIMD 2210633).